The chain runs to 79 residues: Small ribosomal subunit protein uS17 (79 aa).

This sequence belongs to the universal ribosomal protein uS17 family. As to quaternary structure, part of the 30S ribosomal subunit.

Functionally, one of the primary rRNA binding proteins, it binds specifically to the 5'-end of 16S ribosomal RNA. This chain is Small ribosomal subunit protein uS17, found in Rhizobium rhizogenes (strain K84 / ATCC BAA-868) (Agrobacterium radiobacter).